We begin with the raw amino-acid sequence, 234 residues long: Glucosamine-6-phosphate deaminase (234 aa).

Catalysis depends on aspartate 62, which acts as the Proton acceptor; for enolization step. Asparagine 128 serves as the catalytic For ring-opening step. Catalysis depends on histidine 130, which acts as the Proton acceptor; for ring-opening step. The For ring-opening step role is filled by glutamate 135.

Belongs to the glucosamine/galactosamine-6-phosphate isomerase family. NagB subfamily.

The enzyme catalyses alpha-D-glucosamine 6-phosphate + H2O = beta-D-fructose 6-phosphate + NH4(+). Its pathway is amino-sugar metabolism; N-acetylneuraminate degradation; D-fructose 6-phosphate from N-acetylneuraminate: step 5/5. In terms of biological role, catalyzes the reversible isomerization-deamination of glucosamine 6-phosphate (GlcN6P) to form fructose 6-phosphate (Fru6P) and ammonium ion. This chain is Glucosamine-6-phosphate deaminase, found in Streptococcus equi subsp. zooepidemicus (strain MGCS10565).